A 128-amino-acid chain; its full sequence is uncharacterized protein (128 aa).

It localises to the mitochondrion. This is an uncharacterized protein from Schizosaccharomyces pombe (strain 972 / ATCC 24843) (Fission yeast).